The primary structure comprises 252 residues: Protein lin-28 homolog B (252 aa).

Positions 1 to 30 (MAEGGAARGTREEQGKLPEQEEEEEEDPQV) are disordered. Over residues 9–19 (GTREEQGKLPE) the composition is skewed to basic and acidic residues. One can recognise a CSD domain in the interval 32–105 (LGSGHCKWFN…GFESLRVTGP (74 aa)). 2 CCHC-type zinc fingers span residues 130-147 (DRCY…ECNL) and 152-169 (KKCH…NCPH). Residues Cys132, Cys135, His140, Cys145, Cys154, Cys157, His162, and Cys167 each contribute to the Zn(2+) site. Positions 172–252 (VPQHPTTSQG…KGPSVQKKKK (81 aa)) are disordered. Residues 213-222 (GRSELSERSS) show a composition bias toward basic and acidic residues. Residues 225–238 (PQEASLSKISTSPE) show a composition bias toward polar residues.

This sequence belongs to the lin-28 family.

It is found in the nucleus. The protein resides in the nucleolus. Functionally, suppressor of specific microRNA (miRNA) biogenesis. Binds target primary miRNA transcripts and sequester them in the nucleolus, away from the microprocessor complex, hence preventing their processing into mature miRNA. The specific interaction with target pri-miRNAs occurs via an 5'-GGAG-3' motif in the pre-miRNA terminal loop. The sequence is that of Protein lin-28 homolog B (lin28b) from Xenopus laevis (African clawed frog).